Here is a 629-residue protein sequence, read N- to C-terminus: Translation initiation factor IF-2 (629 aa).

Residues Met-1–Ser-20 are disordered. Positions His-127–Lys-297 constitute a tr-type G domain. The interval Gly-136–Thr-143 is G1. Gly-136–Thr-143 contacts GTP. Residues Gly-161–Ala-165 are G2. A G3 region spans residues Asp-183 to Gly-186. Residues Asp-183–His-187 and Asn-237–Asp-240 each bind GTP. Residues Asn-237 to Asp-240 form a G4 region. The interval Ser-273–Lys-275 is G5.

Belongs to the TRAFAC class translation factor GTPase superfamily. Classic translation factor GTPase family. IF-2 subfamily.

The protein localises to the cytoplasm. In terms of biological role, one of the essential components for the initiation of protein synthesis. Protects formylmethionyl-tRNA from spontaneous hydrolysis and promotes its binding to the 30S ribosomal subunits. Also involved in the hydrolysis of GTP during the formation of the 70S ribosomal complex. The chain is Translation initiation factor IF-2 from Mesoplasma florum (strain ATCC 33453 / NBRC 100688 / NCTC 11704 / L1) (Acholeplasma florum).